Consider the following 222-residue polypeptide: Cytochrome b6 (222 aa).

The helical transmembrane segment at 39-59 threads the bilayer; the sequence is IFYCLGGITLTCFIIQFATGF. Residue C42 participates in heme c binding. Residues H93 and H107 each contribute to the heme b site. Helical transmembrane passes span 97 to 117, 123 to 143, and 193 to 213; these read ASMM…TGGF, LTWI…VTGY, and LHTF…FLMI. The heme b site is built by H194 and H209.

It belongs to the cytochrome b family. PetB subfamily. In terms of assembly, the 4 large subunits of the cytochrome b6-f complex are cytochrome b6, subunit IV (17 kDa polypeptide, PetD), cytochrome f and the Rieske protein, while the 4 small subunits are PetG, PetL, PetM and PetN. The complex functions as a dimer. Heme b is required as a cofactor. It depends on heme c as a cofactor.

It localises to the cellular thylakoid membrane. Component of the cytochrome b6-f complex, which mediates electron transfer between photosystem II (PSII) and photosystem I (PSI), cyclic electron flow around PSI, and state transitions. In Picosynechococcus sp. (strain ATCC 27264 / PCC 7002 / PR-6) (Agmenellum quadruplicatum), this protein is Cytochrome b6 (petB).